A 317-amino-acid chain; its full sequence is MPRPGKSSYSEQKPPYSYISLTAMAIQGSQEKMLPLSDIYKFIMDRFPYYRENTQRWQNSLRHNLSFNDCFIKIPRRPDQPGKGSFWALHPNCGDMFENGSFLRRRKRFKVVRAEHLASKSHQMIHYFHHPHNQTKMGLPPSEGSPVPSLGRLPHFQSYNIGNISGNQTSGFKHPFAIENIIGRDYKGVMTGGLPLASMMHHLGYPVPSQISNMVSSMWPHVGMMDSMATMTVPQEYGHFGVPMKTLCHGPSQTIPAVPLPIKPTASLPPVSAIPSLAVNPSIMCPSPPAVAGTLLEPAISQPENKSSMLHSVLVHS.

The fork-head DNA-binding region spans 13 to 107; sequence KPPYSYISLT…ENGSFLRRRK (95 aa).

In terms of tissue distribution, first expressed within the dorsolateral ectoderm, except for the organizer territory. During gastrulation, expressed in 2 ectodermal stripes adjacent to the dorsal midline. With the onset of neurulation, expression shifts first to the neural plate before settling on the bottom of the neural tube, on top of the notochord. Expression is then absent until stage 35, at which stage a pair of cells in the fourth rhombomere in the dorsolateral outer area of the rhombencephalon show expression. This is followed shortly afterwards by expression in a pair of cells in rhombomere 6 at the ventricular side of the rhombencephalon.

The protein resides in the nucleus. Its function is as follows. Transcription factor. The protein is Forkhead box protein B2 of Xenopus laevis (African clawed frog).